The sequence spans 68 residues: MNKEQSADDPSVDLIRVKNMLNSTISMSYPDVVIACIEHKVSLEAFRAIEAALVKHDNNMKDYSLVVD.

An N-terminal signal peptide occupies residues 1–28; that stretch reads MNKEQSADDPSVDLIRVKNMLNSTISMS.

This is an uncharacterized protein from Escherichia coli (strain K12).